Here is a 311-residue protein sequence, read N- to C-terminus: Tryptophan 2,3-dioxygenase (311 aa).

The interval Met1–Asp37 is disordered. Low complexity predominate over residues Ala17–His27. Residues Phe80 to His84, Tyr142, and Arg146 each bind substrate. Residue His269 participates in heme binding. Position 283 (Thr283) interacts with substrate.

The protein belongs to the tryptophan 2,3-dioxygenase family. In terms of assembly, homotetramer. It depends on heme as a cofactor.

It catalyses the reaction L-tryptophan + O2 = N-formyl-L-kynurenine. It participates in amino-acid degradation; L-tryptophan degradation via kynurenine pathway; L-kynurenine from L-tryptophan: step 1/2. Functionally, heme-dependent dioxygenase that catalyzes the oxidative cleavage of the L-tryptophan (L-Trp) pyrrole ring and converts L-tryptophan to N-formyl-L-kynurenine. Catalyzes the oxidative cleavage of the indole moiety. This is Tryptophan 2,3-dioxygenase from Burkholderia cenocepacia (strain ATCC BAA-245 / DSM 16553 / LMG 16656 / NCTC 13227 / J2315 / CF5610) (Burkholderia cepacia (strain J2315)).